Consider the following 37-residue polypeptide: Natriuretic peptide PNP (37 aa).

Residues C14 and C30 are joined by a disulfide bond.

Expressed by the venom gland.

It is found in the secreted. Its function is as follows. Increases urine flow and decreases blood pressure when administered to rats by intravenous injection. Inhibits thrombin-induced platelet aggregation. Stimulates cGMP production via the natriuretic peptide receptor-A (NPR1). This chain is Natriuretic peptide PNP, found in Pseudocerastes persicus (Persian horned viper).